A 1030-amino-acid chain; its full sequence is FACT complex subunit spt-16 (1030 aa).

Residues 424-445 (RLKSNVIKFKEEQENREAEKDN) are a coiled coil. Basic and acidic residues-rich tracts occupy residues 435–449 (EQEN…DQKK) and 464–477 (TRNK…RKER). Disordered stretches follow at residues 435-477 (EQEN…RKER) and 491-514 (ARLS…SYKT). A coiled-coil region spans residues 623–645 (RLIKEMQKRFKTEEAEEREKEGA). Residues 927 to 1030 (VESDNEEAMD…KSGPSHKRRK (104 aa)) are disordered. Acidic residues-rich tracts occupy residues 929-951 (SDNE…EEDA) and 958-983 (ESDE…DSDE). Residues 987-1007 (KDWSDLEEEAANADKRREVEE) are a coiled coil. Residues 998-1014 (NADKRREVEEPSRDRDR) are compositionally biased toward basic and acidic residues. Residues 1015-1030 (KRPHSSKSGPSHKRRK) are compositionally biased toward basic residues.

The protein belongs to the peptidase M24 family. SPT16 subfamily. Component of the FACT complex, a stable heterodimer of spt-16 and hmg-3 or hmg-4. As to expression, expressed in the germline and somatic cells.

Its subcellular location is the nucleus. It localises to the chromosome. Functionally, component of the FACT complex, a general chromatin factor that acts to reorganize nucleosomes. The FACT complex is involved in multiple processes that require DNA as a template such as mRNA elongation, DNA replication and DNA repair. During transcription elongation the FACT complex acts as a histone chaperone that both destabilizes and restores nucleosomal structure. It facilitates the passage of RNA polymerase II and transcription by promoting the dissociation of one histone H2A-H2B dimer from the nucleosome, then subsequently promotes the reestablishment of the nucleosome following the passage of RNA polymerase II. In embryos, promotes cell cycle progression and chromosomal segregation. Plays a role in the development of the anterior pharynx during embryonic development. This Caenorhabditis elegans protein is FACT complex subunit spt-16.